Consider the following 518-residue polypeptide: Probable pectinesterase/pectinesterase inhibitor 16 (518 aa).

Positions 1–33 are cleaved as a signal peptide; that stretch reads MASSSSISNHKIPNTLMFLVIVNFLYLIQTNSA. The interval 30–172 is pectinesterase inhibitor 16; sequence TNSAVSISSN…TGLLTSSLDL (143 aa). 2 N-linked (GlcNAc...) asparagine glycosylation sites follow: N82 and N161. Residues 213–502 form a pectinesterase 16 region; the sequence is DAVVAPDGSG…FTVASFIDGN (290 aa). T289 and Q319 together coordinate substrate. D342 (proton donor; for pectinesterase activity) is an active-site residue. D363 functions as the Nucleophile; for pectinesterase activity in the catalytic mechanism. The substrate site is built by R422 and W424.

This sequence in the N-terminal section; belongs to the PMEI family. The protein in the C-terminal section; belongs to the pectinesterase family. Expressed in siliques and floral stems.

It is found in the secreted. The protein localises to the cell wall. The enzyme catalyses [(1-&gt;4)-alpha-D-galacturonosyl methyl ester](n) + n H2O = [(1-&gt;4)-alpha-D-galacturonosyl](n) + n methanol + n H(+). Its pathway is glycan metabolism; pectin degradation; 2-dehydro-3-deoxy-D-gluconate from pectin: step 1/5. In terms of biological role, acts in the modification of cell walls via demethylesterification of cell wall pectin. The chain is Probable pectinesterase/pectinesterase inhibitor 16 (PME16) from Arabidopsis thaliana (Mouse-ear cress).